Consider the following 157-residue polypeptide: 17.8 kDa class I heat shock protein (157 aa).

The sHSP domain maps to 41 to 156 (ETSAITNARV…KAQVKSIDIS (116 aa)).

Belongs to the small heat shock protein (HSP20) family. As to quaternary structure, homodimer under normal physiological conditions. Aggregates in high oligomeric complexes after heat shock. Binds to AKR2A and to chloroplasts. Expressed ubiquitously at low levels under normal physiological conditions.

The protein resides in the cytoplasm. Its function is as follows. Cytosolic mediator for sorting and targeting of nascent chloroplast outer envelope membrane (OEM) proteins to the chloroplast. Functions as an AKR2A cofactor to facilitate the targeting of OEP7 to chloroplasts. This chain is 17.8 kDa class I heat shock protein (HSP17.8), found in Arabidopsis thaliana (Mouse-ear cress).